The sequence spans 179 residues: Large ribosomal subunit protein uL6 (179 aa).

This sequence belongs to the universal ribosomal protein uL6 family. Part of the 50S ribosomal subunit.

In terms of biological role, this protein binds to the 23S rRNA, and is important in its secondary structure. It is located near the subunit interface in the base of the L7/L12 stalk, and near the tRNA binding site of the peptidyltransferase center. This Chlorobium phaeobacteroides (strain DSM 266 / SMG 266 / 2430) protein is Large ribosomal subunit protein uL6.